A 144-amino-acid polypeptide reads, in one-letter code: Nucleoside diphosphate kinase (144 aa).

Positions 11, 59, 87, 93, 104, and 114 each coordinate ATP. Histidine 117 functions as the Pros-phosphohistidine intermediate in the catalytic mechanism.

It belongs to the NDK family. Homotetramer. Mg(2+) serves as cofactor.

The protein resides in the cytoplasm. The catalysed reaction is a 2'-deoxyribonucleoside 5'-diphosphate + ATP = a 2'-deoxyribonucleoside 5'-triphosphate + ADP. The enzyme catalyses a ribonucleoside 5'-diphosphate + ATP = a ribonucleoside 5'-triphosphate + ADP. Functionally, major role in the synthesis of nucleoside triphosphates other than ATP. The ATP gamma phosphate is transferred to the NDP beta phosphate via a ping-pong mechanism, using a phosphorylated active-site intermediate. This chain is Nucleoside diphosphate kinase, found in Aliivibrio fischeri (strain ATCC 700601 / ES114) (Vibrio fischeri).